Consider the following 591-residue polypeptide: N-acetylgalactosaminyltransferase 7 (591 aa).

Topologically, residues 1–11 are cytoplasmic; it reads MRVSTIRSGRI. The helical; Signal-anchor for type II membrane protein transmembrane segment at 12–29 threads the bilayer; it reads CRLALCLLVLLPLLYLLA. An N-linked (GlcNAc...) asparagine glycan is attached at Asn30. Topologically, residues 30-591 are lumenal; sequence NWSDHHKRVQ…WWFKEIRPRW (562 aa). A disordered region spans residues 68-100; that stretch reads DGLGNFEPKDVKPRSGPGENGEAHSLSPDKKHM. 5 disulfides stabilise this stretch: Cys132–Cys367, Cys358–Cys441, Cys479–Cys496, Cys519–Cys532, and Cys558–Cys573. Positions 141-251 are catalytic subdomain A; it reads LPRTSVIIVF…TNWLPPLLAP (111 aa). Positions 182 and 212 each coordinate substrate. Mn(2+) contacts are provided by Asp235 and His237. Residues 313-375 form a catalytic subdomain B region; sequence PYRSPTHAGG…PCSRVGHVYR (63 aa). Position 344 (Trp344) interacts with substrate. His372 provides a ligand contact to Mn(2+). Substrate contacts are provided by Arg375 and Tyr380. A Ricin B-type lectin domain is found at 466–585; sequence LHWGELRSVA…NDSYQQWWFK (120 aa). The N-linked (GlcNAc...) asparagine glycan is linked to Asn576.

It belongs to the glycosyltransferase 2 family. GalNAc-T subfamily. Mn(2+) is required as a cofactor. As to expression, expressed in developing oocytes and egg chambers. During embryonic stages 9-11, expressed in the primordium of the foregut, midgut and hindgut. Expressed in the salivary glands from embryonic stage 12 onwards. During embryonic stages 12-13, expressed in the posterior midgut and hindgut. During embryonic stages 14-15, expression continues in the hindgut. During embryonic stages 16-17, expressed in the antennomaxillary complex. In third instar larvae, ubiquitously expressed in wing, with increased expression in the notum and ventral wing pouch, eye-antennal, leg and haltere imaginal disks.

Its subcellular location is the golgi apparatus membrane. It catalyses the reaction L-seryl-[protein] + UDP-N-acetyl-alpha-D-galactosamine = a 3-O-[N-acetyl-alpha-D-galactosaminyl]-L-seryl-[protein] + UDP + H(+). The enzyme catalyses L-threonyl-[protein] + UDP-N-acetyl-alpha-D-galactosamine = a 3-O-[N-acetyl-alpha-D-galactosaminyl]-L-threonyl-[protein] + UDP + H(+). The protein operates within protein modification; protein glycosylation. Glycopeptide transferase involved in O-linked oligosaccharide biosynthesis, which catalyzes the transfer of an N-acetyl-D-galactosamine residue to an already glycosylated peptide. In contrast to other proteins of the family, it does not act as a peptide transferase that transfers GalNAc onto serine or threonine residue on the protein receptor, but instead requires the prior addition of a GalNAc on a peptide before adding additional GalNAc moieties. Some peptide transferase activity is however not excluded, considering that its appropriate peptide substrate may remain unidentified. Prefers the monoglycosylated Muc5AC-3 as substrate. Might have a role in protein O-glycosylation in the Golgi and thereby in establishing and/or maintaining a proper secretory apparatus structure. The polypeptide is N-acetylgalactosaminyltransferase 7 (Drosophila melanogaster (Fruit fly)).